The following is a 185-amino-acid chain: Elongation factor P (185 aa).

The protein belongs to the elongation factor P family.

It localises to the cytoplasm. The protein operates within protein biosynthesis; polypeptide chain elongation. In terms of biological role, involved in peptide bond synthesis. Stimulates efficient translation and peptide-bond synthesis on native or reconstituted 70S ribosomes in vitro. Probably functions indirectly by altering the affinity of the ribosome for aminoacyl-tRNA, thus increasing their reactivity as acceptors for peptidyl transferase. The chain is Elongation factor P from Synechococcus sp. (strain JA-3-3Ab) (Cyanobacteria bacterium Yellowstone A-Prime).